We begin with the raw amino-acid sequence, 649 residues long: Threonine--tRNA ligase (649 aa).

Positions 1-60 constitute a TGS domain; sequence MHVTLPDGKQLDLQAGATALDVARALGPRLAQDALAALVNGELMDLMTPLPEGAQVRLIT. The interval 248–544 is catalytic; the sequence is DHRKLGRELE…LIEHYGGDFP (297 aa). Residues Cys-341, His-392, and His-521 each coordinate Zn(2+).

Belongs to the class-II aminoacyl-tRNA synthetase family. Homodimer. The cofactor is Zn(2+).

Its subcellular location is the cytoplasm. The enzyme catalyses tRNA(Thr) + L-threonine + ATP = L-threonyl-tRNA(Thr) + AMP + diphosphate + H(+). Functionally, catalyzes the attachment of threonine to tRNA(Thr) in a two-step reaction: L-threonine is first activated by ATP to form Thr-AMP and then transferred to the acceptor end of tRNA(Thr). Also edits incorrectly charged L-seryl-tRNA(Thr). In Deinococcus geothermalis (strain DSM 11300 / CIP 105573 / AG-3a), this protein is Threonine--tRNA ligase.